The following is a 339-amino-acid chain: Serpentine receptor class alpha-22 (339 aa).

Transmembrane regions (helical) follow at residues 33–53 (IFISTIVLISYCFILLAIQAL), 110–130 (VVDLYFFFLTGYFSTYSVFSL), 150–170 (FIAISLLVIQLLLTLVSFYIA), 199–219 (VRTMVMVCCLIVTGFTYYLSV), 250–270 (IFIILQLSCVMLTSIGMNLLL), and 284–304 (IALFLPGITYANLCLPLVIYF).

The protein belongs to the nematode receptor-like protein sra family.

The protein resides in the membrane. The polypeptide is Serpentine receptor class alpha-22 (sra-22) (Caenorhabditis elegans).